A 360-amino-acid polypeptide reads, in one-letter code: ACT1-like protein (360 aa).

The tract at residues 339–360 (KKQSHNNANDHHEDSMNYSITQ) is disordered.

As to quaternary structure, interacts with the receptor complex composed of ilcr-1 and ilcr-2. Also interacts with pik-1. In terms of tissue distribution, expressed in neurons.

Its function is as follows. May act as an adapter to facilitate downstream signaling for the receptor complex composed of ilcr-1 and ilcr-2, which is a signaling complex that modulates neuronal activity and animal behavior in response to sensory neuron input. The sequence is that of ACT1-like protein from Caenorhabditis elegans.